A 178-amino-acid chain; its full sequence is Inner membrane-spanning protein YciB (178 aa).

A run of 5 helical transmembrane segments spans residues 22–42, 50–70, 72–92, 121–141, and 149–169; these read IFYASGALIAATGLAVAMTYF, ASLITFIMVAVFGTLTLAFHS, LFIKWKVTVIYALFALALLGS, MAWALFFTACALANIYVAFWL, and FKVFGLTALTLVFTVLSVVYI.

Belongs to the YciB family.

Its subcellular location is the cell inner membrane. Plays a role in cell envelope biogenesis, maintenance of cell envelope integrity and membrane homeostasis. This chain is Inner membrane-spanning protein YciB, found in Photorhabdus laumondii subsp. laumondii (strain DSM 15139 / CIP 105565 / TT01) (Photorhabdus luminescens subsp. laumondii).